The primary structure comprises 185 residues: Uroplakin-2 (185 aa).

Positions 1 to 26 (MASPWPVWTLSWILILLAVLVPGAAA) are cleaved as a signal peptide. The propeptide occupies 27–85 (DFNISSLSGLLSPVMTESLLVALPPCHLTGGNATLTVRRANDSKVVRSSFVVPPCRGRR). Asn29, Asn58, and Asn67 each carry an N-linked (GlcNAc...) asparagine glycan. At 86 to 156 (ELVSVVDSGS…IGLAMARTGG (71 aa)) the chain is on the lumenal side. A helical transmembrane segment spans residues 157–177 (MVVITVLLSVAMFLLVLGLII). The Cytoplasmic portion of the chain corresponds to 178–185 (ALALGARK).

This sequence belongs to the uroplakin-2 family. Interacts with uroplakin-1a (UPK1A). As to expression, bladder epithelium.

Its subcellular location is the cell membrane. Its function is as follows. Component of the asymmetric unit membrane (AUM); a highly specialized biomembrane elaborated by terminally differentiated urothelial cells. May play an important role in regulating the assembly of the AUM. In Bos taurus (Bovine), this protein is Uroplakin-2 (UPK2).